The chain runs to 41 residues: Large ribosomal subunit protein bL36 (41 aa).

The protein belongs to the bacterial ribosomal protein bL36 family.

This Rhodopseudomonas palustris (strain BisA53) protein is Large ribosomal subunit protein bL36.